Here is a 272-residue protein sequence, read N- to C-terminus: PHD finger protein ALFIN-LIKE 6 (272 aa).

Over residues 1–23 (MEGGGGGGGGGGGGGGGGGGGGA) the composition is skewed to gly residues. Disordered regions lie at residues 1-24 (MEGGGGGGGGGGGGGGGGGGGGAP) and 162-218 (QAKE…DNTL). Positions 168–182 (PNSSSKSNKPSSKVQ) are enriched in low complexity. The span at 183-200 (SKAESRSKSKLSAPKDEE) shows a compositional bias: basic and acidic residues. Over residues 201-214 (GSGDDEGEEEEDDH) the composition is skewed to acidic residues. A PHD-type zinc finger spans residues 216-268 (NTLCGTCGTNDGKDEFWICCDNCEKWYHGKCVKITPARAEHIKQYKCPDCTNK).

It belongs to the Alfin family.

The protein localises to the nucleus. Histone-binding component that specifically recognizes H3 tails trimethylated on 'Lys-4' (H3K4me3), which mark transcription start sites of virtually all active genes. This Oryza sativa subsp. indica (Rice) protein is PHD finger protein ALFIN-LIKE 6.